We begin with the raw amino-acid sequence, 328 residues long: tRNA uridine(34) hydroxylase (328 aa).

The Rhodanese domain maps to 130–224 (LDEDTVVLDT…YGKDPEVQGE (95 aa)). The active-site Cysteine persulfide intermediate is the C184.

The protein belongs to the TrhO family.

It catalyses the reaction uridine(34) in tRNA + AH2 + O2 = 5-hydroxyuridine(34) in tRNA + A + H2O. Catalyzes oxygen-dependent 5-hydroxyuridine (ho5U) modification at position 34 in tRNAs. This Streptococcus pyogenes serotype M49 (strain NZ131) protein is tRNA uridine(34) hydroxylase.